An 86-amino-acid chain; its full sequence is Small ribosomal subunit protein uS17 (86 aa).

This sequence belongs to the universal ribosomal protein uS17 family. As to quaternary structure, part of the 30S ribosomal subunit.

In terms of biological role, one of the primary rRNA binding proteins, it binds specifically to the 5'-end of 16S ribosomal RNA. This chain is Small ribosomal subunit protein uS17, found in Marinomonas sp. (strain MWYL1).